The primary structure comprises 491 residues: Monothiol glutaredoxin-S11 (491 aa).

3 consecutive Glutaredoxin domains span residues 151–253, 287–389, and 394–491; these read NKRL…NIPL, KERL…GIVA, and EDRL…TLSE. Glutathione is bound at residue lysine 411. Residue cysteine 419 participates in [2Fe-2S] cluster binding. Glutathione is bound by residues arginine 448, phenylalanine 460, and 473–474; that span reads CD.

Belongs to the glutaredoxin family. CGFS subfamily.

The protein localises to the cytoplasm. Functionally, may only reduce GSH-thiol disulfides, but not protein disulfides. This Oryza sativa subsp. japonica (Rice) protein is Monothiol glutaredoxin-S11 (GRXS11).